The following is a 514-amino-acid chain: Deoxynucleoside triphosphate triphosphohydrolase SAMHD1 homolog (514 aa).

The tract at residues 1–24 (MNNTFKYVNEDVSGTEGEESDYDP) is disordered. Position 80 (Lys80) interacts with GTP. Residue Asn83 coordinates a 2'-deoxyribonucleoside 5'-triphosphate. 101-109 (DTEQFQRLR) is a binding site for GTP. Substrate-binding residues include Gln113 and Arg128. An HD domain is found at 128–259 (RFEHSIGVSH…SVDVDKFDYL (132 aa)). Residues His131, His170, and Asp171 each coordinate Zn(2+). Residue His174 participates in substrate binding. His196 is a catalytic residue. Substrate contacts are provided by residues 252 to 258 (DVDKFDY), Tyr258, and Asp262. Asp254 contacts Zn(2+). Residues Arg276, 291-293 (LSK), and Asn297 contribute to the a 2'-deoxyribonucleoside 5'-triphosphate site. Substrate is bound by residues Arg305 and 309–314 (HKLVYT). Positions 315 and 316 each coordinate a 2'-deoxyribonucleoside 5'-triphosphate. Positions 380 and 384 each coordinate GTP.

The protein belongs to the SAMHD1 family. Homodimer; in absence of GTP and dNTP. Homotetramer; in GTP- and dNTP-bound form. It depends on Zn(2+) as a cofactor.

The catalysed reaction is a 2'-deoxyribonucleoside 5'-triphosphate + H2O = a 2'-deoxyribonucleoside + triphosphate + H(+). Allosterically activated and regulated via the combined actions of GTP and dNTPs (dATP, dGTP, dTTP and dCTP): Allosteric site 1 binds GTP, while allosteric site 2 binds dNTP. Allosteric activation promotes the formation of highly active homotetramers. In terms of biological role, has deoxynucleoside triphosphate (dNTPase) activity. In Dictyostelium discoideum (Social amoeba), this protein is Deoxynucleoside triphosphate triphosphohydrolase SAMHD1 homolog.